Here is a 157-residue protein sequence, read N- to C-terminus: Transcription elongation factor GreA (157 aa).

Residues 17 to 37 (ELERLLKLRPQISEAIAEARE) adopt a coiled-coil conformation.

This sequence belongs to the GreA/GreB family.

Necessary for efficient RNA polymerase transcription elongation past template-encoded arresting sites. The arresting sites in DNA have the property of trapping a certain fraction of elongating RNA polymerases that pass through, resulting in locked ternary complexes. Cleavage of the nascent transcript by cleavage factors such as GreA or GreB allows the resumption of elongation from the new 3'terminus. GreA releases sequences of 2 to 3 nucleotides. The protein is Transcription elongation factor GreA of Vibrio parahaemolyticus serotype O3:K6 (strain RIMD 2210633).